Consider the following 785-residue polypeptide: MAEVESPLKLSGAPPPPEGVGGGHCSEISTELIRSLTELQELEAVYERLCGEEKAVEKELDALLEQQNTIESKMVTLHRMGPSLQLIEGDAKQLAGMITFTCSLAENVSSKVRQLDLAKNRLYQAIQRADDILDLKFCMDGVQTALRNEDYEQAAAHIHRYLCLDKSVIELSRQGKEGSMIDANLKLLQEAEQRLKAIVAEKFAIATKEGDLPQVERFFKIFPLLGLHEDGLSKFSEYLCKQVASKAEENLLLVLGSDMSDRRAAVIFADTLTLLFEGIARIVETHQPIVETYYGPGRLFTLIKYLQVECDTQVEKVVNKFIKQRDYHQQFRLVQSNLMRNSATEKIEPRELDPVLTEVTLMNARSELYLRFLRKRISADFEVGDSMASEEVKQEHQKCLDKLLNNCLLSCTMQELIGFYITMEEYFMRETVNKAVALDTYEKGQLTSSMVDDVFYIVKKCIGRALSSSNIDCLCAMINLATRELEADFRDVLCNKLRMGFPATTLQDIQRGVTSAVNIMHSSLQQGKFDTKGIESTDEAKLSFLVTLNNVEVCSENISTLKKTLESDCTKLFSQGIGGEQAQAKFDSCLSDLAAVSNKFRDLLQEGLAELNSSAVKPQVQPWINTFLSVSHSIEEEEFNDYEANDPWVQQFILNLEQQMAEFKASLSPVIYDSLTGLMTSLVAVELEKVVLKSTFNRLGGLQFDKELRSLIAYLTTVTTWTIRDKFARLSQMATILNLERVTEILDYWGANSGPLTWRLTPAEVRQVLALRIDFRNEDIKRLRL.

The segment at 1–24 is disordered; it reads MAEVESPLKLSGAPPPPEGVGGGH. Alanine 2 carries the post-translational modification N-acetylalanine. An interaction with SCFD1 region spans residues 2-84; the sequence is AEVESPLKLS…VTLHRMGPSL (83 aa). Serine 6 carries the post-translational modification Phosphoserine. Residues 85–153 are interaction with STX5; that stretch reads QLIEGDAKQL…TALRNEDYEQ (69 aa). The interval 618-740 is d domain; sequence PQVQPWINTF…SQMATILNLE (123 aa). Residues 741–785 form an e domain; essential for proper cell surface glycosylation region; sequence RVTEILDYWGANSGPLTWRLTPAEVRQVLALRIDFRNEDIKRLRL.

The protein belongs to the COG4 family. Monomer. Component of the conserved oligomeric Golgi (COG) complex which is composed of eight different subunits and is required for normal Golgi morphology and localization. Mediates interaction of SCFD1 with the COG complex. Interacts with STX5.

It is found in the cytoplasm. Its subcellular location is the cytosol. It localises to the golgi apparatus membrane. Its function is as follows. Required for normal Golgi function. Plays a role in SNARE-pin assembly and Golgi-to-ER retrograde transport via its interaction with SCFD1. In Mus musculus (Mouse), this protein is Conserved oligomeric Golgi complex subunit 4 (Cog4).